We begin with the raw amino-acid sequence, 325 residues long: Coiled-coil domain-containing protein 130 homolog (325 aa).

The stretch at 156–262 (LKLENKKLDI…KLKRELIKNE (107 aa)) forms a coiled coil.

Belongs to the CWC16 family.

The protein is Coiled-coil domain-containing protein 130 homolog of Dictyostelium discoideum (Social amoeba).